The primary structure comprises 267 residues: Regulatory protein RecX (267 aa).

Belongs to the RecX family.

The protein resides in the cytoplasm. Functionally, modulates RecA activity. The chain is Regulatory protein RecX from Staphylococcus haemolyticus (strain JCSC1435).